A 329-amino-acid chain; its full sequence is uncharacterized protein (329 aa).

The region spanning 38–184 (IVKLILKSQE…MACLMRAKNF (147 aa)) is the SIS domain. 56–61 (GVGKSA) is an ATP binding site. CBS domains are found at residues 211 to 267 (QTTN…GVSL) and 270 to 329 (EVRH…GLKA).

This sequence belongs to the SIS family. GutQ/KpsF subfamily.

This is an uncharacterized protein from Helicobacter pylori (strain ATCC 700392 / 26695) (Campylobacter pylori).